We begin with the raw amino-acid sequence, 109 residues long: Nascent polypeptide-associated complex protein (109 aa).

The NAC-A/B domain maps to 3–69 (PMNPKQLKKL…TEEERVVLKI (67 aa)).

This sequence belongs to the NAC-alpha family. Homodimer. Interacts with the ribosome. Binds ribosomal RNA.

In terms of biological role, contacts the emerging nascent chain on the ribosome. The polypeptide is Nascent polypeptide-associated complex protein (Pyrococcus abyssi (strain GE5 / Orsay)).